We begin with the raw amino-acid sequence, 2217 residues long: DNA polymerase epsilon catalytic subunit A (2217 aa).

Cys2104, Cys2107, Cys2126, and Cys2129 together coordinate Zn(2+). The CysA-type zinc-finger motif lies at 2104–2129 (CEYCSYVSDLDLCRDGLDGKFQCPRC). The [4Fe-4S] cluster site is built by Cys2160, Cys2163, Cys2175, and Cys2177. The CysB motif motif lies at 2160–2177 (CEKCHTVKRDLMSTNCNC).

This sequence belongs to the DNA polymerase type-B family. Heterotetramer. Consists of 4 subunits: POL2, DPB2, DPB3 and DPB4. Requires [4Fe-4S] cluster as cofactor.

Its subcellular location is the nucleus. It carries out the reaction DNA(n) + a 2'-deoxyribonucleoside 5'-triphosphate = DNA(n+1) + diphosphate. DNA polymerase II participates in chromosomal DNA replication. This chain is DNA polymerase epsilon catalytic subunit A (POL2), found in Candida glabrata (strain ATCC 2001 / BCRC 20586 / JCM 3761 / NBRC 0622 / NRRL Y-65 / CBS 138) (Yeast).